The sequence spans 361 residues: Biotin synthase (361 aa).

Residues 83 to 308 form the Radical SAM core domain; that stretch reads PEVEVEGIIS…RTILRYAGGR (226 aa). Residues Cys-98, Cys-102, and Cys-105 each coordinate [4Fe-4S] cluster. Residues Cys-141, Cys-174, Cys-233, and Arg-303 each contribute to the [2Fe-2S] cluster site.

It belongs to the radical SAM superfamily. Biotin synthase family. Homodimer. The cofactor is [4Fe-4S] cluster. [2Fe-2S] cluster serves as cofactor.

The catalysed reaction is (4R,5S)-dethiobiotin + (sulfur carrier)-SH + 2 reduced [2Fe-2S]-[ferredoxin] + 2 S-adenosyl-L-methionine = (sulfur carrier)-H + biotin + 2 5'-deoxyadenosine + 2 L-methionine + 2 oxidized [2Fe-2S]-[ferredoxin]. It participates in cofactor biosynthesis; biotin biosynthesis; biotin from 7,8-diaminononanoate: step 2/2. In terms of biological role, catalyzes the conversion of dethiobiotin (DTB) to biotin by the insertion of a sulfur atom into dethiobiotin via a radical-based mechanism. In Parafrankia sp. (strain EAN1pec), this protein is Biotin synthase.